The primary structure comprises 980 residues: Glutamate receptor ionotropic, kainate 5 (980 aa).

The N-terminal stretch at 1-14 (MPAELLLLLIVAFA) is a signal peptide. The Extracellular portion of the chain corresponds to 15–544 (SPSCQVLSSL…YFSFLDPFSP (530 aa)). 3 disulfides stabilise this stretch: Cys36–Cys292, Cys83–Cys334, and Cys165–Cys170. Asn219, Asn271, Asn285, Asn322, Asn372, Asn394, Asn400, Asn407, Asn414, and Asn478 each carry an N-linked (GlcNAc...) asparagine glycan. The chain crosses the membrane as a helical span at residues 545–565 (AVWLFMLLAYLAVSCVLFLAA). At 566–622 (RLSPYEWYNPHPCLRARPHILENQYTLGNSLWFPVGGFMQQGSEIMPRALSTRCVSG) the chain is on the cytoplasmic side. Residues 623 to 643 (VWWAFTLIIISSYTANLAAFL) traverse the membrane as a helical segment. The Extracellular portion of the chain corresponds to 644-803 (TVQRMEVPVE…HRAKGLGMEN (160 aa)). The N-linked (GlcNAc...) asparagine glycan is linked to Asn735. A helical membrane pass occupies residues 804-824 (IGGIFIVLICGLIIAVFVAVM). Topologically, residues 825 to 980 (EFIWSTRRSA…AGPRELAEHE (156 aa)) are cytoplasmic. Disordered stretches follow at residues 891–927 (YSAG…PTPC) and 944–980 (ASGA…AEHE). A compositionally biased stretch (gly residues) spans 894–903 (GAGGDAGSAH).

This sequence belongs to the glutamate-gated ion channel (TC 1.A.10.1) family. GRIK5 subfamily. Homotetramer. Heterotetramer with GRIK2. Can form functional heteromeric receptors with GRIK1 and GRIK2. Can form functional heteromeric receptors with GRIK3.

Its subcellular location is the cell membrane. It is found in the postsynaptic cell membrane. The protein resides in the presynaptic cell membrane. Ionotropic glutamate receptor that functions as a cation-permeable ligand-gated ion channel, gated by L-glutamate and the glutamatergic agonist kainic acid. Cannot form functional channels on its own and produces channel activity only in heteromeric assembly with GRIK1 and GRIK2 subunits. Can form functional heteromeric receptors with GRIK3. This Homo sapiens (Human) protein is Glutamate receptor ionotropic, kainate 5 (GRIK5).